We begin with the raw amino-acid sequence, 252 residues long: MLKRIISARYIRNMSSGASLVEKAKKSAAYQAVDENFPEGAKVVGVGSGSTVIYVAERISQLKNKESFVCVPTGFQSKQLIIDAGLRLGTIEQYPEVDIAFDGADEVDTELNLIKGGGACLFQEKLVAAAASKFVIVADFRKRSPSKLGIQWRKGVPIEIVPCAYAKVSKDLEAMGAKKVELRQGGSAKAGPVVTDNNNFLIDADFGEIEDPAKLHTDIKQLVGVVETGLFVQMAYKTYFGEESGEVKCWSK.

This sequence belongs to the ribose 5-phosphate isomerase family.

The protein localises to the cytoplasm. It carries out the reaction aldehydo-D-ribose 5-phosphate = D-ribulose 5-phosphate. It participates in carbohydrate degradation; pentose phosphate pathway; D-ribose 5-phosphate from D-ribulose 5-phosphate (non-oxidative stage): step 1/1. This is Ribose-5-phosphate isomerase (RKI1) from Debaryomyces hansenii (strain ATCC 36239 / CBS 767 / BCRC 21394 / JCM 1990 / NBRC 0083 / IGC 2968) (Yeast).